Consider the following 234-residue polypeptide: Large ribosomal subunit protein uL1 (234 aa).

The protein belongs to the universal ribosomal protein uL1 family. Part of the 50S ribosomal subunit.

Its function is as follows. Binds directly to 23S rRNA. The L1 stalk is quite mobile in the ribosome, and is involved in E site tRNA release. Protein L1 is also a translational repressor protein, it controls the translation of the L11 operon by binding to its mRNA. The protein is Large ribosomal subunit protein uL1 of Klebsiella pneumoniae subsp. pneumoniae (strain ATCC 700721 / MGH 78578).